We begin with the raw amino-acid sequence, 202 residues long: Small ribosomal subunit protein uS4c (202 aa).

The S4 RNA-binding domain maps to 90-153 (MRLDNVIFRL…KSETIISKNI (64 aa)).

It belongs to the universal ribosomal protein uS4 family. As to quaternary structure, part of the 30S ribosomal subunit. Contacts protein S5. The interaction surface between S4 and S5 is involved in control of translational fidelity.

It localises to the plastid. It is found in the chloroplast. In terms of biological role, one of the primary rRNA binding proteins, it binds directly to 16S rRNA where it nucleates assembly of the body of the 30S subunit. With S5 and S12 plays an important role in translational accuracy. This chain is Small ribosomal subunit protein uS4c (rps4), found in Hylocomium splendens (Glittering wood-moss).